The following is a 71-amino-acid chain: Large ribosomal subunit protein bL31 (71 aa).

The Zn(2+) site is built by C16, C18, C37, and C40.

This sequence belongs to the bacterial ribosomal protein bL31 family. Type A subfamily. Part of the 50S ribosomal subunit. Zn(2+) is required as a cofactor.

Binds the 23S rRNA. The protein is Large ribosomal subunit protein bL31 of Solidesulfovibrio magneticus (strain ATCC 700980 / DSM 13731 / RS-1) (Desulfovibrio magneticus).